Here is a 424-residue protein sequence, read N- to C-terminus: UDP-N-acetylglucosamine 1-carboxyvinyltransferase (424 aa).

22 to 23 (KN) is a binding site for phosphoenolpyruvate. R93 contributes to the UDP-N-acetyl-alpha-D-glucosamine binding site. The Proton donor role is filled by C117. C117 is modified (2-(S-cysteinyl)pyruvic acid O-phosphothioketal). UDP-N-acetyl-alpha-D-glucosamine-binding positions include 162–165 (KVSV), D307, and I329.

Belongs to the EPSP synthase family. MurA subfamily.

It localises to the cytoplasm. The catalysed reaction is phosphoenolpyruvate + UDP-N-acetyl-alpha-D-glucosamine = UDP-N-acetyl-3-O-(1-carboxyvinyl)-alpha-D-glucosamine + phosphate. The protein operates within cell wall biogenesis; peptidoglycan biosynthesis. Functionally, cell wall formation. Adds enolpyruvyl to UDP-N-acetylglucosamine. In Actinobacillus pleuropneumoniae serotype 3 (strain JL03), this protein is UDP-N-acetylglucosamine 1-carboxyvinyltransferase.